The sequence spans 192 residues: Ion-translocating oxidoreductase complex subunit B (192 aa).

Residues 1 to 26 are hydrophobic; sequence MNAIWIAVAAVSLLGLAFGAILGYAS. One can recognise a 4Fe-4S domain in the interval 32-91; that stretch reads EDDPVVEKIDEILPQSQCGQCGYPGCRPYAEAISCNGEKINRCAPGGEAVMLKIAELLNV. Positions 49, 52, 57, 74, 117, 120, 123, 127, 147, 150, 153, and 157 each coordinate [4Fe-4S] cluster. 4Fe-4S ferredoxin-type domains follow at residues 108-137 and 138-167; these read MVAV…GATR and VMHT…LQPV.

It belongs to the 4Fe4S bacterial-type ferredoxin family. RnfB subfamily. The complex is composed of six subunits: RsxA, RsxB, RsxC, RsxD, RsxE and RsxG. [4Fe-4S] cluster serves as cofactor.

It localises to the cell inner membrane. Functionally, part of a membrane-bound complex that couples electron transfer with translocation of ions across the membrane. Required to maintain the reduced state of SoxR. In Shigella boydii serotype 4 (strain Sb227), this protein is Ion-translocating oxidoreductase complex subunit B.